Here is a 359-residue protein sequence, read N- to C-terminus: Peptide chain release factor 1 (359 aa).

N5-methylglutamine is present on Gln-238.

This sequence belongs to the prokaryotic/mitochondrial release factor family. Methylated by PrmC. Methylation increases the termination efficiency of RF1.

The protein localises to the cytoplasm. Peptide chain release factor 1 directs the termination of translation in response to the peptide chain termination codons UAG and UAA. This chain is Peptide chain release factor 1, found in Rhodococcus jostii (strain RHA1).